We begin with the raw amino-acid sequence, 248 residues long: Ubiquinone biosynthesis O-methyltransferase (248 aa).

Residues Arg-40, Gly-71, Asp-92, and Met-135 each coordinate S-adenosyl-L-methionine.

Belongs to the methyltransferase superfamily. UbiG/COQ3 family.

The catalysed reaction is a 3-demethylubiquinol + S-adenosyl-L-methionine = a ubiquinol + S-adenosyl-L-homocysteine + H(+). It carries out the reaction a 3-(all-trans-polyprenyl)benzene-1,2-diol + S-adenosyl-L-methionine = a 2-methoxy-6-(all-trans-polyprenyl)phenol + S-adenosyl-L-homocysteine + H(+). It participates in cofactor biosynthesis; ubiquinone biosynthesis. Functionally, O-methyltransferase that catalyzes the 2 O-methylation steps in the ubiquinone biosynthetic pathway. The sequence is that of Ubiquinone biosynthesis O-methyltransferase from Ruegeria pomeroyi (strain ATCC 700808 / DSM 15171 / DSS-3) (Silicibacter pomeroyi).